A 421-amino-acid chain; its full sequence is Acetate kinase (421 aa).

Mg(2+) is bound at residue asparagine 7. Position 14 (lysine 14) interacts with ATP. A substrate-binding site is contributed by arginine 91. Aspartate 148 serves as the catalytic Proton donor/acceptor. ATP contacts are provided by residues 208–212 and 283–285; these read HIGNG and DRR. A Mg(2+)-binding site is contributed by glutamate 387.

It belongs to the acetokinase family. Homodimer. It depends on Mg(2+) as a cofactor. Requires Mn(2+) as cofactor.

It is found in the cytoplasm. It catalyses the reaction acetate + ATP = acetyl phosphate + ADP. Its pathway is metabolic intermediate biosynthesis; acetyl-CoA biosynthesis; acetyl-CoA from acetate: step 1/2. Functionally, catalyzes the formation of acetyl phosphate from acetate and ATP. Can also catalyze the reverse reaction. The chain is Acetate kinase from Geobacter metallireducens (strain ATCC 53774 / DSM 7210 / GS-15).